The following is a 597-amino-acid chain: Histidine protein kinase DivJ (597 aa).

Transmembrane regions (helical) follow at residues 40–57, 62–81, 91–109, 110–125, 137–158, and 159–188; these read LGWL…LFTA, WPVW…SLIF, WLLV…LTGG, VGGA…VAAA, GAAL…GLAP, and AAPT…LLIG. The region spanning 335-553 is the Histidine kinase domain; sequence NMSHELRTPL…TVSVRLPVLL (219 aa). Histidine 338 carries the post-translational modification Phosphohistidine; by autocatalysis. Pro residues predominate over residues 561–585; that stretch reads PTPPAAPEAPSAPEPAPTVEEPPPA. Residues 561–597 form a disordered region; sequence PTPPAAPEAPSAPEPAPTVEEPPPASLGDNVIAFAPR.

The protein resides in the cell membrane. It catalyses the reaction ATP + protein L-histidine = ADP + protein N-phospho-L-histidine.. Functionally, kinase required for the regulation of cell division and differentiation. Is part of a signal transduction pathway, activating PleD by phosphorylation. This is Histidine protein kinase DivJ (divJ) from Caulobacter vibrioides (strain ATCC 19089 / CIP 103742 / CB 15) (Caulobacter crescentus).